The chain runs to 433 residues: NADH-quinone oxidoreductase subunit D (433 aa).

This sequence belongs to the complex I 49 kDa subunit family. As to quaternary structure, NDH-1 is composed of 14 different subunits. Subunits NuoB, C, D, E, F, and G constitute the peripheral sector of the complex.

The protein resides in the cell membrane. The catalysed reaction is a quinone + NADH + 5 H(+)(in) = a quinol + NAD(+) + 4 H(+)(out). In terms of biological role, NDH-1 shuttles electrons from NADH, via FMN and iron-sulfur (Fe-S) centers, to quinones in the respiratory chain. The immediate electron acceptor for the enzyme in this species is believed to be a menaquinone. Couples the redox reaction to proton translocation (for every two electrons transferred, four hydrogen ions are translocated across the cytoplasmic membrane), and thus conserves the redox energy in a proton gradient. The protein is NADH-quinone oxidoreductase subunit D of Cutibacterium acnes (strain DSM 16379 / KPA171202) (Propionibacterium acnes).